The sequence spans 711 residues: Ribosomal RNA large subunit methyltransferase K/L (711 aa).

Residues 42–153 (DAQRAVLWSR…KGRATISVDL (112 aa)) form the THUMP domain.

It belongs to the methyltransferase superfamily. RlmKL family.

The protein localises to the cytoplasm. It carries out the reaction guanosine(2445) in 23S rRNA + S-adenosyl-L-methionine = N(2)-methylguanosine(2445) in 23S rRNA + S-adenosyl-L-homocysteine + H(+). It catalyses the reaction guanosine(2069) in 23S rRNA + S-adenosyl-L-methionine = N(2)-methylguanosine(2069) in 23S rRNA + S-adenosyl-L-homocysteine + H(+). In terms of biological role, specifically methylates the guanine in position 2445 (m2G2445) and the guanine in position 2069 (m7G2069) of 23S rRNA. The polypeptide is Ribosomal RNA large subunit methyltransferase K/L (Xanthomonas oryzae pv. oryzae (strain MAFF 311018)).